We begin with the raw amino-acid sequence, 276 residues long: Borealin (276 aa).

The disordered stretch occupies residues 111–158 (KEAKSSANSEDENMAPLKSTMKKKKASKKAPSTSKKPRTLSISKQGGT).

The protein belongs to the borealin family. In terms of assembly, component of the CPC complex.

The protein localises to the nucleus. It is found in the chromosome. The protein resides in the centromere. It localises to the cytoplasm. Its subcellular location is the cytoskeleton. The protein localises to the spindle. In terms of biological role, component of the chromosomal passenger complex (CPC), a complex that acts as a key regulator of mitosis. The CPC complex has essential functions at the centromere in ensuring correct chromosome alignment and segregation and is required for chromatin-induced microtubule stabilization and spindle assembly. In Danio rerio (Zebrafish), this protein is Borealin (cdca8).